The sequence spans 375 residues: Decapping and exoribonuclease protein Rai1 (375 aa).

Substrate contacts are provided by residues Arg43 and 120–122; that span reads LRG. Glu180, Glu222, Asp224, Glu247, and Leu248 together coordinate Mg(2+). Glu222 contributes to the substrate binding site. Residues Lys249 and Gln274 each contribute to the substrate site.

The protein belongs to the DXO/Dom3Z family. In terms of assembly, interacts with Rat1. It depends on Mg(2+) as a cofactor.

The catalysed reaction is a 5'-end triphospho-ribonucleoside in mRNA + H2O = a 5'-end phospho-ribonucleoside in mRNA + diphosphate + H(+). The enzyme catalyses a 5'-end NAD(+)-phospho-ribonucleoside in mRNA + H2O = a 5'-end phospho-ribonucleoside in mRNA + NAD(+) + H(+). It catalyses the reaction a 5'-end (N(7)-methyl 5'-triphosphoguanosine)-ribonucleoside-ribonucleotide in mRNA + H2O = a (N(7)-methyl 5'-triphosphoguanosine)-nucleoside + a 5'-end phospho-ribonucleoside in mRNA + H(+). Decapping enzyme for NAD-capped RNAs: specifically hydrolyzes the nicotinamide adenine dinucleotide (NAD) cap from a subset of RNAs by removing the entire NAD moiety from the 5'-end of an NAD-capped RNA. The NAD-cap is present at the 5'-end of some RNAs and snoRNAs. In contrast to the canonical 5'-end N7 methylguanosine (m7G) cap, the NAD cap promotes mRNA decay. Also acts as a non-canonical decapping enzyme that removes the entire cap structure of m7G capped or incompletely capped RNAs and mediates their subsequent degradation. Specifically degrades pre-mRNAs with a defective 5'-end m7G cap and is part of a pre-mRNA capping quality control. Possesses 5'-pyrophosphohydrolase activity, hydrolyzing the 5'-end triphosphate to release pyrophosphates, and 5'-3' exonuclease activity. May be involved in RNA degradation in the nucleus. This is Decapping and exoribonuclease protein Rai1 from Drosophila melanogaster (Fruit fly).